The primary structure comprises 429 residues: Ribosomal RNA small subunit methyltransferase B (429 aa).

S-adenosyl-L-methionine-binding positions include 254–260 (CAAPGGK), Asp-277, Asp-303, and Asp-322. The Nucleophile role is filled by Cys-375.

This sequence belongs to the class I-like SAM-binding methyltransferase superfamily. RsmB/NOP family.

The protein resides in the cytoplasm. It catalyses the reaction cytidine(967) in 16S rRNA + S-adenosyl-L-methionine = 5-methylcytidine(967) in 16S rRNA + S-adenosyl-L-homocysteine + H(+). Specifically methylates the cytosine at position 967 (m5C967) of 16S rRNA. The chain is Ribosomal RNA small subunit methyltransferase B from Shigella sonnei (strain Ss046).